A 379-amino-acid polypeptide reads, in one-letter code: Cobalt-precorrin-5B C(1)-methyltransferase (379 aa).

The protein belongs to the CbiD family.

It carries out the reaction Co-precorrin-5B + S-adenosyl-L-methionine = Co-precorrin-6A + S-adenosyl-L-homocysteine. It participates in cofactor biosynthesis; adenosylcobalamin biosynthesis; cob(II)yrinate a,c-diamide from sirohydrochlorin (anaerobic route): step 6/10. Functionally, catalyzes the methylation of C-1 in cobalt-precorrin-5B to form cobalt-precorrin-6A. The polypeptide is Cobalt-precorrin-5B C(1)-methyltransferase (Salmonella arizonae (strain ATCC BAA-731 / CDC346-86 / RSK2980)).